A 305-amino-acid polypeptide reads, in one-letter code: Sulfate adenylyltransferase subunit 2 1 (305 aa).

A disordered region spans residues 283–305; that stretch reads RSGRAIDHDQAGSMERKKREGYF.

The protein belongs to the PAPS reductase family. CysD subfamily. As to quaternary structure, heterodimer composed of CysD, the smaller subunit, and CysN.

The enzyme catalyses sulfate + ATP + H(+) = adenosine 5'-phosphosulfate + diphosphate. It functions in the pathway sulfur metabolism; hydrogen sulfide biosynthesis; sulfite from sulfate: step 1/3. Functionally, with CysN forms the ATP sulfurylase (ATPS) that catalyzes the adenylation of sulfate producing adenosine 5'-phosphosulfate (APS) and diphosphate, the first enzymatic step in sulfur assimilation pathway. APS synthesis involves the formation of a high-energy phosphoric-sulfuric acid anhydride bond driven by GTP hydrolysis by CysN coupled to ATP hydrolysis by CysD. This chain is Sulfate adenylyltransferase subunit 2 1, found in Chromohalobacter salexigens (strain ATCC BAA-138 / DSM 3043 / CIP 106854 / NCIMB 13768 / 1H11).